The primary structure comprises 305 residues: tRNA dimethylallyltransferase (305 aa).

8 to 15 (GPTAVGKT) is a binding site for ATP. 10–15 (TAVGKT) contacts substrate. The tract at residues 33–36 (DSRQ) is interaction with substrate tRNA.

Belongs to the IPP transferase family. In terms of assembly, monomer. Mg(2+) serves as cofactor.

It carries out the reaction adenosine(37) in tRNA + dimethylallyl diphosphate = N(6)-dimethylallyladenosine(37) in tRNA + diphosphate. Catalyzes the transfer of a dimethylallyl group onto the adenine at position 37 in tRNAs that read codons beginning with uridine, leading to the formation of N6-(dimethylallyl)adenosine (i(6)A). This chain is tRNA dimethylallyltransferase, found in Thermotoga maritima (strain ATCC 43589 / DSM 3109 / JCM 10099 / NBRC 100826 / MSB8).